Here is a 321-residue protein sequence, read N- to C-terminus: Basic leucine zipper 34 (321 aa).

Residues 97–189 (TDDDNLHSNP…SGNRILDPKR (93 aa)) form a disordered region. Low complexity-rich tracts occupy residues 110-133 (NNKN…NSFN), 145-155 (NMNNNINNNYN), and 172-182 (SNNNSGDSSGN). Residues 186 to 238 (DPKRVKRILANRQSAQRSRVRKLQYISELERSVTSLQAEVSVLSPRVAFLDHQ) enclose the bZIP domain. Residues 188-207 (KRVKRILANRQSAQRSRVRK) are basic motif. The interval 214–235 (LERSVTSLQAEVSVLSPRVAFL) is leucine-zipper.

As to quaternary structure, forms heterodimers with BZIP18, BZIP43 and VIP1/BZIP51. In terms of tissue distribution, expressed in vascular tissues of leaves, stems and siliques, anthers, filaments, tapetum, mature pollen grains, pistil vascular tissues and papillar cells, and funiculi.

The protein resides in the nucleus. Transcriptional activator involved in the sporophytic control of cell wall patterning and gametophytic control of pollen development. May play a role in the control of metabolic pathways regulating cellular transport and lipid metabolism. This is Basic leucine zipper 34 from Arabidopsis thaliana (Mouse-ear cress).